A 490-amino-acid chain; its full sequence is Histone-lysine N-methyltransferase, H3 lysine-9 specific (490 aa).

In terms of domain architecture, Chromo spans Y8–S69. Disordered stretches follow at residues K61–T133 and K150–N190. Residues F102 to K114 show a composition bias toward basic and acidic residues. The span at V115–T133 shows a compositional bias: polar residues. An N6,N6,N6-trimethyllysine; alternate modification is found at K127. K127 is subject to N6-methyllysine; alternate. Residues T155–L168 are compositionally biased toward basic and acidic residues. Over residues V169–L185 the composition is skewed to polar residues. The Pre-SET domain occupies S258 to G325. Residues C260, C262, C268, C276, C278, C307, C311, C313, and C317 each contribute to the Zn(2+) site. The SET domain occupies L328–A452. Residues K338–W340, Y381, R406, and F407–H410 contribute to the S-adenosyl-L-methionine site. A Zn(2+)-binding site is contributed by C412. The segment at G453 to K472 is autoregulatory loop. The residue at position 455 (K455) is an N6,N6,N6-trimethyllysine; by autocatalysis; alternate. K455 carries the N6,N6-dimethyllysine; by autocatalysis; alternate modification. N6-methyllysine; by autocatalysis; alternate is present on K455. Position 464 is an N6-methyllysine (K464). Residues L473–F489 enclose the Post-SET domain. Positions 477, 479, and 484 each coordinate Zn(2+). C477 to K478 is a binding site for S-adenosyl-L-methionine.

This sequence belongs to the class V-like SAM-binding methyltransferase superfamily. Histone-lysine methyltransferase family. Suvar3-9 subfamily. As to quaternary structure, component of the Clr4 methyltransferase complex (ClrC) composed of at least clr4, rik1, pcu4, rbx1, raf1 and raf2. The cullin pcu4, rik1, raf1, raf2 and the ring-box protein rbx1 are components of an E3 ubiquitin ligase, whose activity is essential for heterochromatin assembly. Interacts directly with pcu4. Interacts with mlo3. In terms of processing, autocatalytic methylation of specific lysine residues in an internal loop (autoregulatory loop) promote a conformational switch that enhances the H3K9me activity of clr4.

It is found in the nucleus. It localises to the cytoplasm. Its subcellular location is the cytoskeleton. The protein resides in the microtubule organizing center. The protein localises to the spindle pole body. It is found in the chromosome. It carries out the reaction L-lysyl(9)-[histone H3] + 3 S-adenosyl-L-methionine = N(6),N(6),N(6)-trimethyl-L-lysyl(9)-[histone H3] + 3 S-adenosyl-L-homocysteine + 3 H(+). It catalyses the reaction N(6)-methyl-L-lysyl(9)-[histone H3] + S-adenosyl-L-methionine = N(6),N(6)-dimethyl-L-lysyl(9)-[histone H3] + S-adenosyl-L-homocysteine + H(+). The enzyme catalyses N(6),N(6)-dimethyl-L-lysyl(9)-[histone H3] + S-adenosyl-L-methionine = N(6),N(6),N(6)-trimethyl-L-lysyl(9)-[histone H3] + S-adenosyl-L-homocysteine + H(+). The catalysed reaction is L-lysyl-[protein] + S-adenosyl-L-methionine = N(6)-methyl-L-lysyl-[protein] + S-adenosyl-L-homocysteine + H(+). It carries out the reaction N(6)-methyl-L-lysyl-[protein] + S-adenosyl-L-methionine = N(6),N(6)-dimethyl-L-lysyl-[protein] + S-adenosyl-L-homocysteine + H(+). It catalyses the reaction N(6),N(6)-dimethyl-L-lysyl-[protein] + S-adenosyl-L-methionine = N(6),N(6),N(6)-trimethyl-L-lysyl-[protein] + S-adenosyl-L-homocysteine + H(+). The enzyme catalyses L-lysyl(9)-[histone H3] + S-adenosyl-L-methionine = N(6)-methyl-L-lysyl(9)-[histone H3] + S-adenosyl-L-homocysteine + H(+). An internal loop (autoregulatory loop) inhibits the catalytic activity of the enzyme by blocking the histone H3K9 substrate-binding pocket. Autocatalytic methylation of specific lysine residues in this loop promote a conformational switch that enhances the H3K9me activity of clr4. In terms of biological role, histone methyltransferase which contributes to the establishment of heterochromatin by specifically methylating histone H3 to form H3K9me. Part of the Clr4 methyltransferase complex (ClrC). ClrC preferentially ubiquitylates H3K14 and ClrC-mediated H3 ubiquitination promotes clr4 methyltransferase activity. Clr4 functions as a reader and writer of H3K9 methylation. It sets the H3K9me mark and afterwards this H3K9me mark is recognized by the chromodomains of clr4 and swi6/HP1, which then recruit additional clr4 leading to the methylation of neighboring nucleosomes. H3K9me represents a specific tag for epigenetic transcriptional repression by recruiting swi6/HP1 to methylated histones which leads to transcriptional silencing within centromeric heterochromatin, telomeres, ribosomal DNA repeats, and the silent mating-type region. Clr4 methyltransferase activity promotes the assembly of a tripartite complex composed of ClrC and complexes involved in siRNA generation. Apart from H3K9, also methylates non-histone proteins such as mlo3. Interacts with mlo3 to promote the processing of centromeric and antisense RNAs. This chain is Histone-lysine N-methyltransferase, H3 lysine-9 specific (clr4), found in Schizosaccharomyces pombe (strain 972 / ATCC 24843) (Fission yeast).